The sequence spans 553 residues: 5'-nucleotidase (553 aa).

The signal sequence occupies residues 1–21; it reads MKQRLIVKTALSAAILATLAG. C22 carries N-palmitoyl cysteine lipidation. C22 is lipidated: S-diacylglycerol cysteine. The a divalent metal cation site is built by D45, H47, D88, N120, H221, H256, and Q258. Substrate is bound by residues F432 and 501-507; that span reads YNAAGGD.

This sequence belongs to the 5'-nucleotidase family. Requires chloride as cofactor. It depends on Mg(2+) as a cofactor.

It localises to the cell outer membrane. It carries out the reaction a ribonucleoside 5'-phosphate + H2O = a ribonucleoside + phosphate. Functionally, degradation of extracellular 5'-nucleotides for nutritional needs. This is 5'-nucleotidase (nutA) from Vibrio vulnificus (strain CMCP6).